A 210-amino-acid polypeptide reads, in one-letter code: Protein GrpE (210 aa).

Positions 1 to 42 (MANEERTIPETNVASERPEDPVESQTRAEGGEQIQEAAPETA) are disordered.

The protein belongs to the GrpE family. Homodimer.

It is found in the cytoplasm. Functionally, participates actively in the response to hyperosmotic and heat shock by preventing the aggregation of stress-denatured proteins, in association with DnaK and GrpE. It is the nucleotide exchange factor for DnaK and may function as a thermosensor. Unfolded proteins bind initially to DnaJ; upon interaction with the DnaJ-bound protein, DnaK hydrolyzes its bound ATP, resulting in the formation of a stable complex. GrpE releases ADP from DnaK; ATP binding to DnaK triggers the release of the substrate protein, thus completing the reaction cycle. Several rounds of ATP-dependent interactions between DnaJ, DnaK and GrpE are required for fully efficient folding. The polypeptide is Protein GrpE (Nitrosococcus oceani (strain ATCC 19707 / BCRC 17464 / JCM 30415 / NCIMB 11848 / C-107)).